Here is a 258-residue protein sequence, read N- to C-terminus: Type II restriction enzyme HincII (258 aa).

The enzyme catalyses Endonucleolytic cleavage of DNA to give specific double-stranded fragments with terminal 5'-phosphates.. Its function is as follows. A P subtype restriction enzyme that recognizes the double-stranded sequence 5'-GTYRAC-3' and cleaves after Y-3. The protein is Type II restriction enzyme HincII (hincIIR) of Haemophilus influenzae.